The sequence spans 279 residues: Pantothenate synthetase (279 aa).

26–33 contacts ATP; the sequence is MGNLHEGH. The active-site Proton donor is His33. Gln57 serves as a coordination point for (R)-pantoate. Gln57 contributes to the beta-alanine binding site. ATP is bound at residue 144–147; it reads GKKD. Gln150 lines the (R)-pantoate pocket. Residues Val173 and 181–184 each bind ATP; that span reads LSSR.

The protein belongs to the pantothenate synthetase family. As to quaternary structure, homodimer.

The protein localises to the cytoplasm. The catalysed reaction is (R)-pantoate + beta-alanine + ATP = (R)-pantothenate + AMP + diphosphate + H(+). It participates in cofactor biosynthesis; (R)-pantothenate biosynthesis; (R)-pantothenate from (R)-pantoate and beta-alanine: step 1/1. Catalyzes the condensation of pantoate with beta-alanine in an ATP-dependent reaction via a pantoyl-adenylate intermediate. The sequence is that of Pantothenate synthetase from Burkholderia cenocepacia (strain ATCC BAA-245 / DSM 16553 / LMG 16656 / NCTC 13227 / J2315 / CF5610) (Burkholderia cepacia (strain J2315)).